The following is a 288-amino-acid chain: Bifunctional protein FolD (288 aa).

NADP(+)-binding positions include 166-168 (GAS) and isoleucine 232.

Belongs to the tetrahydrofolate dehydrogenase/cyclohydrolase family. In terms of assembly, homodimer.

It catalyses the reaction (6R)-5,10-methylene-5,6,7,8-tetrahydrofolate + NADP(+) = (6R)-5,10-methenyltetrahydrofolate + NADPH. The catalysed reaction is (6R)-5,10-methenyltetrahydrofolate + H2O = (6R)-10-formyltetrahydrofolate + H(+). Its pathway is one-carbon metabolism; tetrahydrofolate interconversion. Its function is as follows. Catalyzes the oxidation of 5,10-methylenetetrahydrofolate to 5,10-methenyltetrahydrofolate and then the hydrolysis of 5,10-methenyltetrahydrofolate to 10-formyltetrahydrofolate. In Escherichia coli (strain SMS-3-5 / SECEC), this protein is Bifunctional protein FolD.